Here is a 252-residue protein sequence, read N- to C-terminus: Imidazole glycerol phosphate synthase subunit HisF (252 aa).

Active-site residues include D11 and D130.

It belongs to the HisA/HisF family. As to quaternary structure, heterodimer of HisH and HisF.

The protein localises to the cytoplasm. The enzyme catalyses 5-[(5-phospho-1-deoxy-D-ribulos-1-ylimino)methylamino]-1-(5-phospho-beta-D-ribosyl)imidazole-4-carboxamide + L-glutamine = D-erythro-1-(imidazol-4-yl)glycerol 3-phosphate + 5-amino-1-(5-phospho-beta-D-ribosyl)imidazole-4-carboxamide + L-glutamate + H(+). Its pathway is amino-acid biosynthesis; L-histidine biosynthesis; L-histidine from 5-phospho-alpha-D-ribose 1-diphosphate: step 5/9. IGPS catalyzes the conversion of PRFAR and glutamine to IGP, AICAR and glutamate. The HisF subunit catalyzes the cyclization activity that produces IGP and AICAR from PRFAR using the ammonia provided by the HisH subunit. The polypeptide is Imidazole glycerol phosphate synthase subunit HisF (Bacillus cytotoxicus (strain DSM 22905 / CIP 110041 / 391-98 / NVH 391-98)).